Reading from the N-terminus, the 237-residue chain is DNA repair protein RecO (237 aa).

It belongs to the RecO family.

Involved in DNA repair and RecF pathway recombination. In Rickettsia peacockii (strain Rustic), this protein is DNA repair protein RecO.